The primary structure comprises 403 residues: Octaketide synthase 2 (403 aa).

Cys174 is a catalytic residue. CoA-binding positions include Ser281 and 318–321 (GGRA).

Belongs to the thiolase-like superfamily. Chalcone/stilbene synthases family. Homodimer.

Its pathway is secondary metabolite biosynthesis; flavonoid biosynthesis. Its function is as follows. Catalyzes the iterative condensations of 8 molecules of malonyl-CoA to produce aromatic octaketides, SEK4 and SEK4b, the products of the minimal polyketide synthase for the benzoisochromanequinone actinorhodin. May be involved in the biosynthesis of the octaketide barbaloin. This is Octaketide synthase 2 (PKS4) from Aloe arborescens (Kidachi aloe).